Reading from the N-terminus, the 1801-residue chain is Focadhesin (1801 aa).

Lysine 819 bears the N6-acetyllysine mark.

Interacts with VCL. Ubiquitous. High expression in brain followed by testis, muscle, pancreas, heart, ovary, small intestine, placenta, prostate, thymus, kidney, colon, liver, lung, spleen and leukocytes. Expression is reduced in most glioblastomas and all glioblastoma cell lines.

The protein localises to the cell junction. It localises to the focal adhesion. It is found in the cytoplasm. The protein resides in the cytosol. In terms of biological role, required for the maintenance of SKIC2 and SKIC3 proteostatic levels in the liver. May be involved in the regulation of RNA degradation by the exosome complex. Potential tumor suppressor in gliomas. The sequence is that of Focadhesin from Homo sapiens (Human).